The following is a 225-amino-acid chain: MDSSGKYNAAKLALELVKDGMVLGIGSGSTVEVFLNLLGDKIREEGLEIYGIPSSYQSYFAAIRNGVEIVDLVEFEPDLCIDGADQVDAKLNCIKGGGGAMTREKIVAKASRKVVIIVDESKLVEKLSMPVPVEVLPFAYGWVLREIEKMGCKARLREGKGKIGPVITDNGNFVVDCDFGVIEEDRVEGLEGEIKLISGVVENGIFSKELIDAVIAGSSRSARFL.

Residues 27–30 (SGST), 82–85 (DGAD), and 95–98 (KGGG) contribute to the substrate site. Catalysis depends on Glu-104, which acts as the Proton acceptor. Lys-122 is a binding site for substrate.

It belongs to the ribose 5-phosphate isomerase family. In terms of assembly, homodimer.

The catalysed reaction is aldehydo-D-ribose 5-phosphate = D-ribulose 5-phosphate. The protein operates within carbohydrate degradation; pentose phosphate pathway; D-ribose 5-phosphate from D-ribulose 5-phosphate (non-oxidative stage): step 1/1. Its function is as follows. Catalyzes the reversible conversion of ribose-5-phosphate to ribulose 5-phosphate. In Archaeoglobus fulgidus (strain ATCC 49558 / DSM 4304 / JCM 9628 / NBRC 100126 / VC-16), this protein is Ribose-5-phosphate isomerase A.